A 415-amino-acid chain; its full sequence is Imidazolonepropionase (415 aa).

Positions 80 and 82 each coordinate Fe(3+). H80 and H82 together coordinate Zn(2+). Residues R89, Y152, and H185 each coordinate 4-imidazolone-5-propanoate. Y152 is a binding site for N-formimidoyl-L-glutamate. H250 lines the Fe(3+) pocket. Residue H250 coordinates Zn(2+). A 4-imidazolone-5-propanoate-binding site is contributed by Q253. A Fe(3+)-binding site is contributed by D325. D325 contributes to the Zn(2+) binding site. Residues N327 and G329 each contribute to the N-formimidoyl-L-glutamate site. Residue T330 coordinates 4-imidazolone-5-propanoate.

The protein belongs to the metallo-dependent hydrolases superfamily. HutI family. Requires Zn(2+) as cofactor. Fe(3+) is required as a cofactor.

It localises to the cytoplasm. The enzyme catalyses 4-imidazolone-5-propanoate + H2O = N-formimidoyl-L-glutamate. The protein operates within amino-acid degradation; L-histidine degradation into L-glutamate; N-formimidoyl-L-glutamate from L-histidine: step 3/3. Its function is as follows. Catalyzes the hydrolytic cleavage of the carbon-nitrogen bond in imidazolone-5-propanoate to yield N-formimidoyl-L-glutamate. It is the third step in the universal histidine degradation pathway. In Rhizobium meliloti (strain 1021) (Ensifer meliloti), this protein is Imidazolonepropionase.